We begin with the raw amino-acid sequence, 611 residues long: Methionine--tRNA ligase (611 aa).

A 'HIGH' region motif is present at residues 12–22 (PYANGPRHIGH). The Zn(2+) site is built by cysteine 144, cysteine 147, cysteine 157, and cysteine 160. The 'KMSKS' region motif lies at 348-352 (KFSSS). Serine 351 serves as a coordination point for ATP.

It belongs to the class-I aminoacyl-tRNA synthetase family. MetG type 1 subfamily. In terms of assembly, monomer. It depends on Zn(2+) as a cofactor.

It localises to the cytoplasm. It catalyses the reaction tRNA(Met) + L-methionine + ATP = L-methionyl-tRNA(Met) + AMP + diphosphate. In terms of biological role, is required not only for elongation of protein synthesis but also for the initiation of all mRNA translation through initiator tRNA(fMet) aminoacylation. In Corynebacterium urealyticum (strain ATCC 43042 / DSM 7109), this protein is Methionine--tRNA ligase.